Consider the following 292-residue polypeptide: Lipoyl synthase (292 aa).

7 residues coordinate [4Fe-4S] cluster: cysteine 38, cysteine 43, cysteine 49, cysteine 64, cysteine 68, cysteine 71, and serine 277. One can recognise a Radical SAM core domain in the interval 50 to 266 (WSKGTATFLL…REIALDAGFR (217 aa)).

Belongs to the radical SAM superfamily. Lipoyl synthase family. [4Fe-4S] cluster serves as cofactor.

It localises to the cytoplasm. It catalyses the reaction [[Fe-S] cluster scaffold protein carrying a second [4Fe-4S](2+) cluster] + N(6)-octanoyl-L-lysyl-[protein] + 2 oxidized [2Fe-2S]-[ferredoxin] + 2 S-adenosyl-L-methionine + 4 H(+) = [[Fe-S] cluster scaffold protein] + N(6)-[(R)-dihydrolipoyl]-L-lysyl-[protein] + 4 Fe(3+) + 2 hydrogen sulfide + 2 5'-deoxyadenosine + 2 L-methionine + 2 reduced [2Fe-2S]-[ferredoxin]. Its pathway is protein modification; protein lipoylation via endogenous pathway; protein N(6)-(lipoyl)lysine from octanoyl-[acyl-carrier-protein]: step 2/2. Its function is as follows. Catalyzes the radical-mediated insertion of two sulfur atoms into the C-6 and C-8 positions of the octanoyl moiety bound to the lipoyl domains of lipoate-dependent enzymes, thereby converting the octanoylated domains into lipoylated derivatives. The polypeptide is Lipoyl synthase (Chlorobaculum parvum (strain DSM 263 / NCIMB 8327) (Chlorobium vibrioforme subsp. thiosulfatophilum)).